Consider the following 709-residue polypeptide: Copper amine oxidase vicK1 (709 aa).

The signal sequence occupies residues 1–20; that stretch reads MKLFLLFTLTLVNIFSVSLQ. D365 acts as the Proton acceptor in catalysis. C383 and C408 are oxidised to a cystine. The active-site Schiff-base intermediate with substrate; via topaquinone is Y448. Y448 is modified (2',4',5'-topaquinone). Cu cation is bound by residues H496 and H498. 8 residues coordinate Ca(2+): D505, L506, D507, E548, F641, E645, D651, and L652. Residue H662 participates in Cu cation binding.

This sequence belongs to the copper/topaquinone oxidase family. As to quaternary structure, homodimer; disulfide-linked. Cu cation is required as a cofactor. It depends on Ca(2+) as a cofactor. Requires L-topaquinone as cofactor. Topaquinone (TPQ) is generated by copper-dependent autoxidation of a specific tyrosyl residue.

The protein operates within mycotoxin biosynthesis. Its function is as follows. Copper amine oxidase, part of the gene cluster that mediates the biosynthesis of the secondary metabolite victorin, the molecular basis for Victoria blight of oats. Within the pathway, vicK1 catalyzes the oxidative deamination of the N-terminal glycyl moiety of the hexapeptides in order to produce the active glyoxylate form victorins. The pathway starts with the processing of the precursor vicA1 by several endopeptidases including kexin proteases as well as the cluster-specific S28 family peptidases vicPa and vicPb to produce 7 identical copies of the hexapeptide Gly-Leu-Lys-Leu-Ala-Phe. After being excised from the precursor peptide, the core peptides are cyclized and modified post-translationally by enzymes encoded within the gene cluster. The ustYa family oxidase vicYb is required for the formation of the macrocycle in victorin and the copper amine oxidases (CAOs) vicK1 and vicK2 are responsible for converting victorin to the active form by oxidizing the N-terminal glycyl residue in the peptides to glyoxylate. Relaxed substrate specificity of enzymes in the victorin biosynthetic pathway results in a metabolic grid that produces a set of analogs including victorinines B, C, E or HV-toxin M. The polypeptide is Copper amine oxidase vicK1 (Bipolaris victoriae (strain FI3) (Victoria blight of oats agent)).